Reading from the N-terminus, the 183-residue chain is MASSMLSNAAMATTAATAGAQASMVAPFNGLKSFATFPITKKSSNDFSSLPSNGGRVQCMQVWPPVGKKKFETLSYLPPLSDAQLLAQVQYLLNKGWIPCIEFELEHPFVYRENHRSPGYQDGRYWTMWKLPMYGCTDPAQVLNEVEEAKKAYPSAFIRIIGFDNKRQVQCVSFIAYKPAGGL.

The transit peptide at 1–58 (MASSMLSNAAMATTAATAGAQASMVAPFNGLKSFATFPITKKSSNDFSSLPSNGGRVQ) directs the protein to the chloroplast.

The protein belongs to the RuBisCO small chain family. As to quaternary structure, heterohexadecamer of 8 large and 8 small subunits.

The protein localises to the plastid. It localises to the chloroplast. Its function is as follows. RuBisCO catalyzes two reactions: the carboxylation of D-ribulose 1,5-bisphosphate, the primary event in carbon dioxide fixation, as well as the oxidative fragmentation of the pentose substrate. Both reactions occur simultaneously and in competition at the same active site. Although the small subunit is not catalytic it is essential for maximal activity. The protein is Ribulose bisphosphate carboxylase small subunit, chloroplastic 1 of Amaranthus hypochondriacus (Prince-of-Wales feather).